We begin with the raw amino-acid sequence, 67 residues long: DNA-directed RNA polymerase subunit omega (67 aa).

It belongs to the RNA polymerase subunit omega family. The RNAP catalytic core consists of 2 alpha, 1 beta, 1 beta' and 1 omega subunit. When a sigma factor is associated with the core the holoenzyme is formed, which can initiate transcription.

It carries out the reaction RNA(n) + a ribonucleoside 5'-triphosphate = RNA(n+1) + diphosphate. Its function is as follows. Promotes RNA polymerase assembly. Latches the N- and C-terminal regions of the beta' subunit thereby facilitating its interaction with the beta and alpha subunits. In Bordetella avium (strain 197N), this protein is DNA-directed RNA polymerase subunit omega.